We begin with the raw amino-acid sequence, 244 residues long: Type III pantothenate kinase (244 aa).

12–19 (VVGNTHVR) contacts ATP. Substrate contacts are provided by residues tyrosine 79 and 83–86 (GLDR). The active-site Proton acceptor is aspartate 85. K(+) is bound at residue aspartate 105. Threonine 108 is a binding site for ATP. Threonine 163 serves as a coordination point for substrate.

This sequence belongs to the type III pantothenate kinase family. As to quaternary structure, homodimer. NH4(+) is required as a cofactor. The cofactor is K(+).

Its subcellular location is the cytoplasm. It carries out the reaction (R)-pantothenate + ATP = (R)-4'-phosphopantothenate + ADP + H(+). The protein operates within cofactor biosynthesis; coenzyme A biosynthesis; CoA from (R)-pantothenate: step 1/5. Functionally, catalyzes the phosphorylation of pantothenate (Pan), the first step in CoA biosynthesis. The chain is Type III pantothenate kinase from Synechococcus sp. (strain JA-3-3Ab) (Cyanobacteria bacterium Yellowstone A-Prime).